The sequence spans 336 residues: Fructose-1,6-bisphosphatase class 1 (336 aa).

Residues Glu98, Asp117, Leu119, and Asp120 each contribute to the Mg(2+) site. Substrate contacts are provided by residues 120-123, Asn210, and Lys276; that span reads DGSS. Glu282 contacts Mg(2+).

Belongs to the FBPase class 1 family. In terms of assembly, homotetramer. Mg(2+) serves as cofactor.

The protein resides in the cytoplasm. The catalysed reaction is beta-D-fructose 1,6-bisphosphate + H2O = beta-D-fructose 6-phosphate + phosphate. It participates in carbohydrate biosynthesis; gluconeogenesis. The chain is Fructose-1,6-bisphosphatase class 1 from Caulobacter vibrioides (strain ATCC 19089 / CIP 103742 / CB 15) (Caulobacter crescentus).